Here is a 204-residue protein sequence, read N- to C-terminus: MPIGVPKVPFRLPGEEDAVWIDVYNRLYRERLLFLGQHVDDEIANQLIGIMMYLNGEDESKDMYLYINSPGGAVLAGISVYDTMQFVVPDVHTICMGLAASMGSFILTGGEITKRIALPHARIMIHQPASSYYDGQAGECIMEAEEVLKLRDCITKVYVQRTGKPLWVISEDMERDVFMSAKEAQIYGIVDFVAIETTSNSLTN.

The active-site Nucleophile is S101. Residue H126 is part of the active site.

It belongs to the peptidase S14 family. Component of the chloroplastic Clp protease core complex.

The protein resides in the plastid. The protein localises to the chloroplast stroma. It catalyses the reaction Hydrolysis of proteins to small peptides in the presence of ATP and magnesium. alpha-casein is the usual test substrate. In the absence of ATP, only oligopeptides shorter than five residues are hydrolyzed (such as succinyl-Leu-Tyr-|-NHMec, and Leu-Tyr-Leu-|-Tyr-Trp, in which cleavage of the -Tyr-|-Leu- and -Tyr-|-Trp bonds also occurs).. Functionally, cleaves peptides in various proteins in a process that requires ATP hydrolysis. Has a chymotrypsin-like activity. Plays a major role in the degradation of misfolded proteins. This Anthoceros angustus (Hornwort) protein is ATP-dependent Clp protease proteolytic subunit.